The sequence spans 393 residues: Elongation factor Tu (393 aa).

In terms of domain architecture, tr-type G spans 10–202 (KPHVNIGTIG…AVDEYIPTPE (193 aa)). Positions 19-26 (GHVDHGKT) are G1. Position 19–26 (19–26 (GHVDHGKT)) interacts with GTP. Position 26 (threonine 26) interacts with Mg(2+). The segment at 60–64 (GITIN) is G2. The segment at 81-84 (DCPG) is G3. GTP is bound by residues 81 to 85 (DCPGH) and 136 to 139 (NKAD). A G4 region spans residues 136–139 (NKAD). The G5 stretch occupies residues 174–176 (SAL).

Belongs to the TRAFAC class translation factor GTPase superfamily. Classic translation factor GTPase family. EF-Tu/EF-1A subfamily. Monomer.

The protein localises to the cytoplasm. It catalyses the reaction GTP + H2O = GDP + phosphate + H(+). Its function is as follows. GTP hydrolase that promotes the GTP-dependent binding of aminoacyl-tRNA to the A-site of ribosomes during protein biosynthesis. This is Elongation factor Tu from Clostridium novyi (strain NT).